The chain runs to 357 residues: Cinnamyl alcohol dehydrogenase 1 (357 aa).

An Enoyl reductase (ER) domain is found at 20-348 (GILSPYTYTL…KNDVRYRFVV (329 aa)). Residue Cys47 participates in Zn(2+) binding. Ser49 contributes to the NADP(+) binding site. Residues His69, Glu70, Cys100, Cys103, Cys106, Cys114, and Cys163 each contribute to the Zn(2+) site. NADP(+)-binding positions include Thr167, 188 to 193 (GLGGVG), 211 to 216 (SSSDKK), Thr251, Gly275, and 298 to 300 (SFI).

Belongs to the zinc-containing alcohol dehydrogenase family. As to quaternary structure, homodimer. Zn(2+) serves as cofactor. As to expression, accumulates mainly in the placenta of red fruits, and, to a lower extent, in green fruits placenta, pericarp and seeds.

The protein resides in the cytoplasm. It catalyses the reaction (E)-cinnamyl alcohol + NADP(+) = (E)-cinnamaldehyde + NADPH + H(+). It carries out the reaction (E)-coniferol + NADP(+) = (E)-coniferaldehyde + NADPH + H(+). The catalysed reaction is (E)-sinapyl alcohol + NADP(+) = (E)-sinapaldehyde + NADPH + H(+). The enzyme catalyses (E)-4-coumaroyl alcohol + NADP(+) = (E)-4-coumaraldehyde + NADPH + H(+). It catalyses the reaction (E)-caffeyl alcohol + NADP(+) = (E)-caffeyl aldehyde + NADPH + H(+). It carries out the reaction vanillin + NADPH + H(+) = 4-hydroxy-3-methoxy-benzenemethanol + NADP(+). It participates in aromatic compound metabolism; phenylpropanoid biosynthesis. Its activity is regulated as follows. Inhibited, in a concentration-dependent manner, by N-(O-hydroxyphenyl) sulfinamoyltertiobutyl acetate (OHPAS), a specific cinnamyl alcohol dehydrogenase (CAD) inhibitor, as well as by ethylenediaminetetraacetic acid (EDTA), a metalloenzyme inhibitor. Functionally, involved in the biosynthesis of capsinoids natural products (e.g. capsiate), non-pungent alkaloids synthesized from phenylpropanoid intermediates in the placental tissue of sweet chili pepper fruit acting as repellant on herbivorous mammals. Catalyzes the reduction of vanillin to generate vanillyl alcohol, a precursor of capsiate, a non-pungent component that accumulates mainly in the placenta of mature red fruits, but also in green fruits to lower levels. Involved in lignin biosynthesis. Catalyzes the final step specific for the production of lignin monomers. Mediates the conversion of cinnamaldehyde and coniferaldehyde to cinnamyl alcohol and coniferyl alcohol, respectively. Catalyzes the NADPH-dependent reduction of 5-hydroxyconiferaldehyde, sinapaldehyde, 4-coumaraldehyde and caffeyl aldehyde to their respective alcohols. The chain is Cinnamyl alcohol dehydrogenase 1 from Capsicum annuum (Capsicum pepper).